The primary structure comprises 198 residues: ATP-dependent Clp protease proteolytic subunit 1 (198 aa).

Ser-98 acts as the Nucleophile in catalysis. The active site involves His-123.

Belongs to the peptidase S14 family. As to quaternary structure, fourteen ClpP subunits assemble into 2 heptameric rings which stack back to back to give a disk-like structure with a central cavity, resembling the structure of eukaryotic proteasomes.

The protein resides in the cytoplasm. The catalysed reaction is Hydrolysis of proteins to small peptides in the presence of ATP and magnesium. alpha-casein is the usual test substrate. In the absence of ATP, only oligopeptides shorter than five residues are hydrolyzed (such as succinyl-Leu-Tyr-|-NHMec, and Leu-Tyr-Leu-|-Tyr-Trp, in which cleavage of the -Tyr-|-Leu- and -Tyr-|-Trp bonds also occurs).. Cleaves peptides in various proteins in a process that requires ATP hydrolysis. Has a chymotrypsin-like activity. Plays a major role in the degradation of misfolded proteins. The chain is ATP-dependent Clp protease proteolytic subunit 1 from Leptospira interrogans serogroup Icterohaemorrhagiae serovar copenhageni (strain Fiocruz L1-130).